Reading from the N-terminus, the 270-residue chain is tRNA pseudouridine synthase A (270 aa).

Aspartate 60 serves as the catalytic Nucleophile. The segment at 107–111 (FHARF) is RNA binding. Tyrosine 118 serves as a coordination point for substrate. An interaction with tRNA region spans residues 168–172 (QCQSR).

The protein belongs to the tRNA pseudouridine synthase TruA family. As to quaternary structure, homodimer.

It carries out the reaction uridine(38/39/40) in tRNA = pseudouridine(38/39/40) in tRNA. Formation of pseudouridine at positions 38, 39 and 40 in the anticodon stem and loop of transfer RNAs. This chain is tRNA pseudouridine synthase A, found in Escherichia fergusonii (strain ATCC 35469 / DSM 13698 / CCUG 18766 / IAM 14443 / JCM 21226 / LMG 7866 / NBRC 102419 / NCTC 12128 / CDC 0568-73).